The sequence spans 287 residues: 4-diphosphocytidyl-2-C-methyl-D-erythritol kinase (287 aa).

Lys-12 is a catalytic residue. 97-107 is a binding site for ATP; that stretch reads PMGGGLGGGSS. Asp-139 is an active-site residue.

It belongs to the GHMP kinase family. IspE subfamily.

The catalysed reaction is 4-CDP-2-C-methyl-D-erythritol + ATP = 4-CDP-2-C-methyl-D-erythritol 2-phosphate + ADP + H(+). Its pathway is isoprenoid biosynthesis; isopentenyl diphosphate biosynthesis via DXP pathway; isopentenyl diphosphate from 1-deoxy-D-xylulose 5-phosphate: step 3/6. Its function is as follows. Catalyzes the phosphorylation of the position 2 hydroxy group of 4-diphosphocytidyl-2C-methyl-D-erythritol. This Marinobacter nauticus (strain ATCC 700491 / DSM 11845 / VT8) (Marinobacter aquaeolei) protein is 4-diphosphocytidyl-2-C-methyl-D-erythritol kinase.